A 120-amino-acid polypeptide reads, in one-letter code: Large ribosomal subunit protein eL8 (120 aa).

This sequence belongs to the eukaryotic ribosomal protein eL8 family. Part of the 50S ribosomal subunit. Probably part of the RNase P complex.

The protein localises to the cytoplasm. In terms of biological role, multifunctional RNA-binding protein that recognizes the K-turn motif in ribosomal RNA, the RNA component of RNase P, box H/ACA, box C/D and box C'/D' sRNAs. The sequence is that of Large ribosomal subunit protein eL8 from Natronomonas pharaonis (strain ATCC 35678 / DSM 2160 / CIP 103997 / JCM 8858 / NBRC 14720 / NCIMB 2260 / Gabara) (Halobacterium pharaonis).